A 129-amino-acid chain; its full sequence is Protein Turandot C (129 aa).

A signal peptide spans 1-21 (MNASISLLCFALLLISPFCLG).

The protein belongs to the Turandot family.

Its subcellular location is the secreted. Functionally, a humoral factor that may play a role in stress tolerance. This is Protein Turandot C from Drosophila sechellia (Fruit fly).